Reading from the N-terminus, the 145-residue chain is 3-hydroxyacyl-[acyl-carrier-protein] dehydratase FabZ (145 aa).

His49 is an active-site residue.

Belongs to the thioester dehydratase family. FabZ subfamily.

It is found in the cytoplasm. It carries out the reaction a (3R)-hydroxyacyl-[ACP] = a (2E)-enoyl-[ACP] + H2O. In terms of biological role, involved in unsaturated fatty acids biosynthesis. Catalyzes the dehydration of short chain beta-hydroxyacyl-ACPs and long chain saturated and unsaturated beta-hydroxyacyl-ACPs. The protein is 3-hydroxyacyl-[acyl-carrier-protein] dehydratase FabZ of Rickettsia bellii (strain OSU 85-389).